Reading from the N-terminus, the 310-residue chain is Porphobilinogen deaminase (310 aa).

The residue at position 242 (Cys-242) is an S-(dipyrrolylmethanemethyl)cysteine.

This sequence belongs to the HMBS family. As to quaternary structure, monomer. Requires dipyrromethane as cofactor.

The catalysed reaction is 4 porphobilinogen + H2O = hydroxymethylbilane + 4 NH4(+). Its pathway is porphyrin-containing compound metabolism; protoporphyrin-IX biosynthesis; coproporphyrinogen-III from 5-aminolevulinate: step 2/4. Functionally, tetrapolymerization of the monopyrrole PBG into the hydroxymethylbilane pre-uroporphyrinogen in several discrete steps. In Shewanella oneidensis (strain ATCC 700550 / JCM 31522 / CIP 106686 / LMG 19005 / NCIMB 14063 / MR-1), this protein is Porphobilinogen deaminase.